The sequence spans 609 residues: Dihydroxy-acid dehydratase (609 aa).

Residue D81 participates in Mg(2+) binding. Residue C122 participates in [2Fe-2S] cluster binding. Residues D123 and K124 each coordinate Mg(2+). K124 bears the N6-carboxylysine mark. C195 provides a ligand contact to [2Fe-2S] cluster. E491 contacts Mg(2+). S517 functions as the Proton acceptor in the catalytic mechanism.

It belongs to the IlvD/Edd family. Homodimer. [2Fe-2S] cluster serves as cofactor. Requires Mg(2+) as cofactor.

The catalysed reaction is (2R)-2,3-dihydroxy-3-methylbutanoate = 3-methyl-2-oxobutanoate + H2O. It carries out the reaction (2R,3R)-2,3-dihydroxy-3-methylpentanoate = (S)-3-methyl-2-oxopentanoate + H2O. It participates in amino-acid biosynthesis; L-isoleucine biosynthesis; L-isoleucine from 2-oxobutanoate: step 3/4. It functions in the pathway amino-acid biosynthesis; L-valine biosynthesis; L-valine from pyruvate: step 3/4. Its function is as follows. Functions in the biosynthesis of branched-chain amino acids. Catalyzes the dehydration of (2R,3R)-2,3-dihydroxy-3-methylpentanoate (2,3-dihydroxy-3-methylvalerate) into 2-oxo-3-methylpentanoate (2-oxo-3-methylvalerate) and of (2R)-2,3-dihydroxy-3-methylbutanoate (2,3-dihydroxyisovalerate) into 2-oxo-3-methylbutanoate (2-oxoisovalerate), the penultimate precursor to L-isoleucine and L-valine, respectively. The protein is Dihydroxy-acid dehydratase of Acinetobacter baumannii (strain AB0057).